We begin with the raw amino-acid sequence, 946 residues long: Inter-alpha-trypsin inhibitor heavy chain H2 (946 aa).

Residues 1–18 (MQRLACVLIWLFLLEEQA) form the signal peptide. A propeptide spanning residues 19–54 (FEIPANEYSEFAGYSNLVELAPDKFPFVQENRRYQR) is cleaved from the precursor. Positions 56 to 185 (LPEESGEMTD…KVQFELHYQE (130 aa)) constitute a VIT domain. Ser-60 is subject to Phosphoserine. Asn-118 and Asn-263 each carry an N-linked (GlcNAc...) asparagine glycan. Residues Glu-282 and Glu-283 each carry the 4-carboxyglutamate modification. The region spanning 308-468 (PKNILFVIDV…YDFLKRLSNE (161 aa)) is the VWFA domain. An N-linked (GlcNAc...) asparagine glycan is attached at Asn-445. Ser-466 is subject to Phosphoserine. N-linked (GlcNAc...) asparagine glycosylation is present at Asn-578. Asp-702 is subject to Aspartate 1-(chondroitin 4-sulfate)-ester. The propeptide occupies 703–946 (PHFIIYLPKS…PQLYSFLKRP (244 aa)). Ser-886 is modified (phosphoserine).

It belongs to the ITIH family. In terms of assembly, I-alpha-I plasma protease inhibitors are assembled from one or two heavy chains (HC) and one light chain, bikunin. Inter-alpha-inhibitor (I-alpha-I) is composed of ITIH1/HC1, ITIH2/HC2 and bikunin. Post-translationally, heavy chains are linked to bikunin via chondroitin 4-sulfate esterified to the alpha-carboxyl of the C-terminal aspartate after propeptide cleavage. In terms of processing, phosphorylated by FAM20C in the extracellular medium.

It localises to the secreted. Functionally, may act as a carrier of hyaluronan in serum or as a binding protein between hyaluronan and other matrix protein, including those on cell surfaces in tissues to regulate the localization, synthesis and degradation of hyaluronan which are essential to cells undergoing biological processes. This chain is Inter-alpha-trypsin inhibitor heavy chain H2 (ITIH2), found in Mesocricetus auratus (Golden hamster).